Here is a 409-residue protein sequence, read N- to C-terminus: Serine/threonine transporter SstT (409 aa).

9 helical membrane-spanning segments follow: residues 17–37 (LVGQ…FFPA), 49–69 (FVSA…MASI), 83–103 (ILLL…IASF), 142–162 (ALIS…GIAF), 180–200 (VSLI…GLVA), 218–238 (LVVL…LIVF), 301–321 (GAAI…GIAV), 331–351 (VVAS…LLLI), and 357–377 (LFGI…IIAI).

Belongs to the dicarboxylate/amino acid:cation symporter (DAACS) (TC 2.A.23) family.

The protein resides in the cell inner membrane. It catalyses the reaction L-serine(in) + Na(+)(in) = L-serine(out) + Na(+)(out). The catalysed reaction is L-threonine(in) + Na(+)(in) = L-threonine(out) + Na(+)(out). Involved in the import of serine and threonine into the cell, with the concomitant import of sodium (symport system). This chain is Serine/threonine transporter SstT, found in Pseudomonas aeruginosa (strain UCBPP-PA14).